We begin with the raw amino-acid sequence, 436 residues long: Gamma-glutamyl phosphate reductase (436 aa).

This sequence belongs to the gamma-glutamyl phosphate reductase family.

The protein resides in the cytoplasm. It catalyses the reaction L-glutamate 5-semialdehyde + phosphate + NADP(+) = L-glutamyl 5-phosphate + NADPH + H(+). It participates in amino-acid biosynthesis; L-proline biosynthesis; L-glutamate 5-semialdehyde from L-glutamate: step 2/2. Functionally, catalyzes the NADPH-dependent reduction of L-glutamate 5-phosphate into L-glutamate 5-semialdehyde and phosphate. The product spontaneously undergoes cyclization to form 1-pyrroline-5-carboxylate. The chain is Gamma-glutamyl phosphate reductase from Prochlorococcus marinus (strain MIT 9515).